Reading from the N-terminus, the 259-residue chain is Haloacid dehalogenase-like hydrolase domain-containing protein 2 (259 aa).

Residues aspartate 13 and serine 15 each contribute to the Mg(2+) site. Substrate is bound by residues 13–15 and 46–47; these read DLS and TN. Residues 47–71 adopt a coiled-coil conformation; it reads NTTKESKQDLLERLRKLEFDISEDE. Lysine 50 is modified (N6-succinyllysine). Lysine 179 lines the substrate pocket. Aspartate 204 contributes to the Mg(2+) binding site.

This sequence belongs to the HAD-like hydrolase superfamily. Mg(2+) serves as cofactor.

The chain is Haloacid dehalogenase-like hydrolase domain-containing protein 2 (HDHD2) from Homo sapiens (Human).